The chain runs to 179 residues: Large ribosomal subunit protein uL6c (179 aa).

It belongs to the universal ribosomal protein uL6 family. Part of the 50S ribosomal subunit.

The protein resides in the plastid. The protein localises to the chloroplast. Its function is as follows. Binds 23S rRNA. This chain is Large ribosomal subunit protein uL6c (rpl6), found in Trieres chinensis (Marine centric diatom).